The following is an 89-amino-acid chain: Class I hydrophobin C (89 aa).

The signal sequence occupies residues 1-16 (MKFSLATIALAAAVAA). Disulfide bonds link Cys-28–Cys-68, Cys-39–Cys-60, Cys-40–Cys-52, and Cys-69–Cys-85. Asn-36 carries an N-linked (GlcNAc...) asparagine glycan.

It belongs to the fungal hydrophobin family.

Its subcellular location is the secreted. It localises to the cell wall. It is found in the vacuole. The protein resides in the cytoplasmic vesicle. Its function is as follows. Aerial growth, conidiation, and dispersal of filamentous fungi in the environment rely upon a capability of their secreting small amphipathic proteins called hydrophobins (HPBs) with low sequence identity. Class I can self-assemble into an outermost layer of rodlet bundles on aerial cell surfaces, conferring cellular hydrophobicity that supports fungal growth, development and dispersal; whereas Class II form highly ordered films at water-air interfaces through intermolecular interactions but contribute nothing to the rodlet structure. Hyd1C contributes to certain cell wall-related features, such as hydrophobicity but is not involved in cell wall-related events during fungal proliferation in host hemocoel. Does not contribute to conidial hydrophobicity. This chain is Class I hydrophobin C, found in Beauveria bassiana (strain ARSEF 2860) (White muscardine disease fungus).